Reading from the N-terminus, the 320-residue chain is GTP 3',8-cyclase (320 aa).

The Radical SAM core domain occupies L4–K227. R13 provides a ligand contact to GTP. Residues C20 and C24 each coordinate [4Fe-4S] cluster. Residue Y26 coordinates S-adenosyl-L-methionine. Residue C27 participates in [4Fe-4S] cluster binding. Residue R63 participates in GTP binding. Residue G67 participates in S-adenosyl-L-methionine binding. A GTP-binding site is contributed by T94. An S-adenosyl-L-methionine-binding site is contributed by S118. GTP is bound at residue K155. M189 serves as a coordination point for S-adenosyl-L-methionine. 2 residues coordinate [4Fe-4S] cluster: C249 and C252. R254–R256 contacts GTP. C266 serves as a coordination point for [4Fe-4S] cluster. Over residues K300–N312 the composition is skewed to basic and acidic residues. The disordered stretch occupies residues K300–G320.

Belongs to the radical SAM superfamily. MoaA family. Monomer and homodimer. [4Fe-4S] cluster is required as a cofactor.

The catalysed reaction is GTP + AH2 + S-adenosyl-L-methionine = (8S)-3',8-cyclo-7,8-dihydroguanosine 5'-triphosphate + 5'-deoxyadenosine + L-methionine + A + H(+). The protein operates within cofactor biosynthesis; molybdopterin biosynthesis. In terms of biological role, catalyzes the cyclization of GTP to (8S)-3',8-cyclo-7,8-dihydroguanosine 5'-triphosphate. In Alkaliphilus oremlandii (strain OhILAs) (Clostridium oremlandii (strain OhILAs)), this protein is GTP 3',8-cyclase.